Reading from the N-terminus, the 346-residue chain is Calcium uniporter protein, mitochondrial (346 aa).

The Mitochondrial matrix portion of the chain corresponds to 1 to 195; sequence MTKGKLLTTP…ECDKAAHRGA (195 aa). Residues 55-120 are disordered; it reads ELPPPDPQDS…GEGKDEGEFV (66 aa). 2 stretches are compositionally biased toward basic and acidic residues: residues 76 to 91 and 109 to 119; these read MEAK…KADT and REGEGKDEGEF. The helical transmembrane segment at 196–216 threads the bilayer; the sequence is QRIALAGCGGLIGYWYIVYRL. At 217 to 226 the chain is on the mitochondrial intermembrane side; sequence TFETDLGWDV. The Selectivity filter signature appears at 224–232; sequence WDVMEPVTY. The helical transmembrane segment at 227–248 threads the bilayer; the sequence is MEPVTYLVGLSTLIGGYMWFLW. E228 contacts Ca(2+). The Mitochondrial matrix segment spans residues 249–346; the sequence is HNREVSYRSA…KEGEEDDEDD (98 aa). The disordered stretch occupies residues 306-346; that stretch reads WNETQDEGGDEKVTKALRDERKNNNGTKNKSKEGEEDDEDD. Over residues 315 to 328 the composition is skewed to basic and acidic residues; it reads DEKVTKALRDERKN.

Belongs to the MCU (TC 1.A.77) family. In terms of assembly, homotetramer, assembles in a dimer or dimers configuration with two interfaces.

Its subcellular location is the mitochondrion inner membrane. The catalysed reaction is Ca(2+)(in) = Ca(2+)(out). In terms of biological role, highly selective calcium channel localized to the inner mitochondrial membrane, which mediates calcium uptake into the mitochondrial matrix. Mitochondrial calcium homeostasis plays key roles in cellular physiology and regulates ATP production, cytoplasmic calcium signals and activation of cell death pathways. Sufficient to operate as a pore-forming channel without the need of calcium-sensor or auxiliary subunit. This Cyphellophora europaea (strain CBS 101466) (Phialophora europaea) protein is Calcium uniporter protein, mitochondrial.